Reading from the N-terminus, the 118-residue chain is Large ribosomal subunit protein uL18 (118 aa).

This sequence belongs to the universal ribosomal protein uL18 family. As to quaternary structure, part of the 50S ribosomal subunit; part of the 5S rRNA/L5/L18/L25 subcomplex. Contacts the 5S and 23S rRNAs.

In terms of biological role, this is one of the proteins that bind and probably mediate the attachment of the 5S RNA into the large ribosomal subunit, where it forms part of the central protuberance. The polypeptide is Large ribosomal subunit protein uL18 (Rickettsia conorii (strain ATCC VR-613 / Malish 7)).